We begin with the raw amino-acid sequence, 188 residues long: Large ribosomal subunit protein uL22 (188 aa).

The tract at residues 155-188 is disordered; sequence STPEGAKKGKKKKGTKDAVEKSSKRVKTAATAAH.

This sequence belongs to the universal ribosomal protein uL22 family.

In Agriotes lineatus (Lined click beetle), this protein is Large ribosomal subunit protein uL22 (RpL17).